We begin with the raw amino-acid sequence, 174 residues long: Large ribosomal subunit protein bL17 (174 aa).

The protein belongs to the bacterial ribosomal protein bL17 family. As to quaternary structure, part of the 50S ribosomal subunit. Contacts protein L32.

The polypeptide is Large ribosomal subunit protein bL17 (Acetivibrio thermocellus (strain ATCC 27405 / DSM 1237 / JCM 9322 / NBRC 103400 / NCIMB 10682 / NRRL B-4536 / VPI 7372) (Clostridium thermocellum)).